The chain runs to 249 residues: Diaminopimelate epimerase (249 aa).

Substrate-binding residues include N11 and N60. The active-site Proton donor is C69. Residues 70-71 (GN), N164, and 182-183 (ER) each bind substrate. C192 serves as the catalytic Proton acceptor. 193–194 (GT) provides a ligand contact to substrate.

This sequence belongs to the diaminopimelate epimerase family. As to quaternary structure, homodimer.

It is found in the cytoplasm. It catalyses the reaction (2S,6S)-2,6-diaminopimelate = meso-2,6-diaminopimelate. It participates in amino-acid biosynthesis; L-lysine biosynthesis via DAP pathway; DL-2,6-diaminopimelate from LL-2,6-diaminopimelate: step 1/1. In terms of biological role, catalyzes the stereoinversion of LL-2,6-diaminopimelate (L,L-DAP) to meso-diaminopimelate (meso-DAP), a precursor of L-lysine and an essential component of the bacterial peptidoglycan. In Campylobacter lari (strain RM2100 / D67 / ATCC BAA-1060), this protein is Diaminopimelate epimerase.